We begin with the raw amino-acid sequence, 328 residues long: Ferredoxin--NADP reductase (328 aa).

7 residues coordinate FAD: glutamate 36, glutamine 44, tyrosine 49, valine 89, phenylalanine 123, aspartate 284, and threonine 324.

Belongs to the ferredoxin--NADP reductase type 2 family. In terms of assembly, homodimer. FAD serves as cofactor.

It carries out the reaction 2 reduced [2Fe-2S]-[ferredoxin] + NADP(+) + H(+) = 2 oxidized [2Fe-2S]-[ferredoxin] + NADPH. In Lacticaseibacillus paracasei (strain ATCC 334 / BCRC 17002 / CCUG 31169 / CIP 107868 / KCTC 3260 / NRRL B-441) (Lactobacillus paracasei), this protein is Ferredoxin--NADP reductase.